The following is a 193-amino-acid chain: dTTP/UTP pyrophosphatase (193 aa).

Aspartate 71 (proton acceptor) is an active-site residue.

This sequence belongs to the Maf family. YhdE subfamily. The cofactor is a divalent metal cation.

It localises to the cytoplasm. It catalyses the reaction dTTP + H2O = dTMP + diphosphate + H(+). It carries out the reaction UTP + H2O = UMP + diphosphate + H(+). Nucleoside triphosphate pyrophosphatase that hydrolyzes dTTP and UTP. May have a dual role in cell division arrest and in preventing the incorporation of modified nucleotides into cellular nucleic acids. The protein is dTTP/UTP pyrophosphatase of Citrifermentans bemidjiense (strain ATCC BAA-1014 / DSM 16622 / JCM 12645 / Bem) (Geobacter bemidjiensis).